We begin with the raw amino-acid sequence, 287 residues long: MAIRKFKPYTPGTRQRVVTDFSEITGSKPERSLIVSKHRNKGRNNRGVITCRHRGGGHKRQYRLVDFRRDKKNINAKVAAIHYDPHRNARLALLFYEDGEKRYIIAPAGIKVGQNVISGEGVPIEEGNAMPLSSMPLGSNVHCVELYAGRGAQMVRSAGASAQLMAKEGEYVALKLPSTEVRLVRKECYATLGEVGNSEIRNTSLGKAGRRRWLGRRPQVRGSVMNPCDHPHGGGEGKAPIGRAGPVTPWGKAALGLKTRKKNKPSNKLVVRRRRRISKRSRGGRDS.

A disordered region spans residues 221-287 (RGSVMNPCDH…SKRSRGGRDS (67 aa)). The segment covering 258–287 (KTRKKNKPSNKLVVRRRRRISKRSRGGRDS) has biased composition (basic residues).

Belongs to the universal ribosomal protein uL2 family. Part of the 50S ribosomal subunit. Forms a bridge to the 30S subunit in the 70S ribosome.

Functionally, one of the primary rRNA binding proteins. Required for association of the 30S and 50S subunits to form the 70S ribosome, for tRNA binding and peptide bond formation. It has been suggested to have peptidyltransferase activity; this is somewhat controversial. Makes several contacts with the 16S rRNA in the 70S ribosome. In Prochlorococcus marinus subsp. pastoris (strain CCMP1986 / NIES-2087 / MED4), this protein is Large ribosomal subunit protein uL2.